The primary structure comprises 324 residues: Transcriptional regulator protein Pur-beta (324 aa).

A disordered region spans residues 1–47; sequence MADGDSGSERGGGGGGGGGPGGFQPAPRGGGGGGGGPGGEQETQELA. Alanine 2 is modified (N-acetylalanine). 2 positions are modified to phosphoserine: serine 6 and serine 8. Residues 9–39 are compositionally biased toward gly residues; the sequence is ERGGGGGGGGGPGGFQPAPRGGGGGGGGPGG. Arginine 28 is modified (omega-N-methylarginine). Positions 37-263 are DNA-binding; sequence PGGEQETQEL…GVFLRVSEVK (227 aa). Phosphothreonine is present on threonine 43. Serine 113 carries the post-translational modification Phosphoserine. Arginine 164 bears the Omega-N-methylarginine mark. Residue lysine 279 is modified to N6-acetyllysine. Residues 297 to 307 show a composition bias toward basic and acidic residues; that stretch reads RQRDKLYERRG. Positions 297–324 are disordered; that stretch reads RQRDKLYERRGGGSGGGDESEGEEVDED. The residue at position 306 (arginine 306) is an Omega-N-methylarginine. Serine 310 and serine 316 each carry phosphoserine. Residues 314–324 are compositionally biased toward acidic residues; that stretch reads DESEGEEVDED.

This sequence belongs to the PUR DNA-binding protein family. Homodimer, heterodimer with PURA and heterotrimer with PURA and YBX1/Y-box protein 1. Interacts with MYOCD and SRF.

The protein resides in the nucleus. Its function is as follows. Transcriptional regulator which can act as an activator or a repressor. Represses the transcription of ACTA2 in fibroblasts and smooth muscle cells via its ability to interact with the purine-rich strand of a MCAT-containing element in the 5' flanking region of the gene. Represses the transcription of MYOCD, capable of repressing all isoforms of MYOCD but the magnitude of the repressive effects is most notable for the SMC-specific isoforms. Promotes hepatic glucose production by activating the transcription of ADCY6, leading to cAMP accumulation, increased PKA activity, CREB activation, and increased transcription of PCK1 and G6PC genes. Has capacity to bind repeated elements in single-stranded DNA such as the purine-rich single strand of the PUR element located upstream of the MYC gene. Participates in transcriptional and translational regulation of alpha-MHC expression in cardiac myocytes by binding to the purine-rich negative regulatory (PNR) element. Modulates constitutive liver galectin-3 gene transcription by binding to its promoter. May play a role in the dendritic transport of a subset of mRNAs. The chain is Transcriptional regulator protein Pur-beta (Purb) from Mus musculus (Mouse).